The following is a 362-amino-acid chain: Variable large protein 25 (362 aa).

Residues methionine 1–glycine 26 form the signal peptide. Cysteine 27 is lipidated: N-palmitoyl cysteine. Residue cysteine 27 is the site of S-diacylglycerol cysteine attachment.

The protein belongs to the variable large protein (Vlp) family. Alpha subfamily.

The protein resides in the cell outer membrane. In terms of biological role, the Vlp and Vsp proteins are antigenically distinct proteins, only one vlp or vsp gene is transcriptionally active at any one time. Switching between these genes is a mechanism of host immune response evasion. The protein is Variable large protein 25 of Borrelia hermsii.